The following is a 95-amino-acid chain: Endoribonuclease VapD homolog (95 aa).

It belongs to the VapD ribonuclease family. Homodimer.

In terms of biological role, cleaves ssRNA, mostly between U:A. In Helicobacter pylori (strain ATCC 700392 / 26695) (Campylobacter pylori), this protein is Endoribonuclease VapD homolog.